Consider the following 491-residue polypeptide: Glutamyl-tRNA(Gln) amidotransferase subunit A (491 aa).

Active-site charge relay system residues include K76 and S154. The active-site Acyl-ester intermediate is S178.

This sequence belongs to the amidase family. GatA subfamily. In terms of assembly, heterotrimer of A, B and C subunits.

It carries out the reaction L-glutamyl-tRNA(Gln) + L-glutamine + ATP + H2O = L-glutaminyl-tRNA(Gln) + L-glutamate + ADP + phosphate + H(+). Functionally, allows the formation of correctly charged Gln-tRNA(Gln) through the transamidation of misacylated Glu-tRNA(Gln) in organisms which lack glutaminyl-tRNA synthetase. The reaction takes place in the presence of glutamine and ATP through an activated gamma-phospho-Glu-tRNA(Gln). This chain is Glutamyl-tRNA(Gln) amidotransferase subunit A, found in Cereibacter sphaeroides (strain ATCC 17029 / ATH 2.4.9) (Rhodobacter sphaeroides).